The primary structure comprises 790 residues: B3 domain-containing transcription repressor VAL1 (790 aa).

Residues 234-260 are disordered; the sequence is KPSRPAISTPPVASKSAQARIGRPPVE. A DNA-binding region (TF-B3) is located at residues 295-396; it reads FEKTLSASDA…KLIMGSRKAA (102 aa). Disordered stretches follow at residues 400 to 429 and 446 to 468; these read DMQGCGLTNGTSTEDTSSSGVTENPPSING and NLNSETNGGRIGDDPTRVKEKKR. The span at 405–429 shows a compositional bias: polar residues; that stretch reads GLTNGTSTEDTSSSGVTENPPSING. Residues 538–588 form a CW-type zinc finger; sequence SGEQERWATCDDCSKWRRLPVDALLSFKWTCIDNVWDVSRCSCSAPEESLK. 4 residues coordinate Zn(2+): cysteine 547, cysteine 550, cysteine 568, and cysteine 580. Positions 685-732 form a coiled coil; the sequence is LMMRRKKKQLERDVTAAEDKKKKDMELAESDKSKEEKEVNTARIDLNS. Residues 689-737 are disordered; the sequence is RKKKQLERDVTAAEDKKKKDMELAESDKSKEEKEVNTARIDLNSDPYNK. Positions 694–724 are enriched in basic and acidic residues; it reads LERDVTAAEDKKKKDMELAESDKSKEEKEVN.

In terms of assembly, interacts with SNL1. Expressed in flowers and at lower levels in roots, stems and leaves.

The protein resides in the nucleus. Its function is as follows. Transcriptional repressor of gene expression involved in embryonic pathways, such as LEC1, ABI3, and FUS3. Repressor of the sugar-inducible genes involved in the seed maturation program in seedlings. Plays an essential role in regulating the transition from seed maturation to seedling growth. Functionally redundant with VAL2/HSL1. The chain is B3 domain-containing transcription repressor VAL1 (VAL1) from Arabidopsis thaliana (Mouse-ear cress).